We begin with the raw amino-acid sequence, 343 residues long: Homeobox-leucine zipper protein HOX16 (343 aa).

The segment at residues 74–133 (LPEKKRRLTPEQVHLLERSFEEENKLEPERKTELARKLGLQPRQVAVWFQNRRARWKTKQ) is a DNA-binding region (homeobox). The segment at 132-176 (KQLERDFDRLKASFDALRADHDALLQDNHRLHSQVMSLTEKLQEK) is leucine-zipper. Positions 218–239 (FEEQQEQQVKAEDRLSTGSGGS) are disordered.

Belongs to the HD-ZIP homeobox family. Class I subfamily. Expressed in seedlings, stems, leaf sheaths and blades and panicles.

It is found in the nucleus. In terms of biological role, probable transcription factor. The chain is Homeobox-leucine zipper protein HOX16 (HOX16) from Oryza sativa subsp. japonica (Rice).